The chain runs to 635 residues: Biosynthetic arginine decarboxylase (635 aa).

N6-(pyridoxal phosphate)lysine is present on K100. 282-292 (IDIGGGLGVDY) provides a ligand contact to substrate.

It belongs to the Orn/Lys/Arg decarboxylase class-II family. SpeA subfamily. Requires Mg(2+) as cofactor. Pyridoxal 5'-phosphate is required as a cofactor.

The enzyme catalyses L-arginine + H(+) = agmatine + CO2. Its pathway is amine and polyamine biosynthesis; agmatine biosynthesis; agmatine from L-arginine: step 1/1. Catalyzes the biosynthesis of agmatine from arginine. This Pelobacter propionicus (strain DSM 2379 / NBRC 103807 / OttBd1) protein is Biosynthetic arginine decarboxylase.